A 437-amino-acid polypeptide reads, in one-letter code: tRNA-2-methylthio-N(6)-dimethylallyladenosine synthase (437 aa).

Residues 1 to 115 form the MTTase N-terminal domain; sequence MKVYIETMGC…ISQVIHKEKA (115 aa). Positions 10, 46, 78, 148, 152, and 155 each coordinate [4Fe-4S] cluster. Residues 134–367 form the Radical SAM core domain; that stretch reads KKAQIRSLLN…QNRHKEILEE (234 aa). The TRAM domain maps to 370-436; it reads KLEVGKTHVV…KGRLMATTKG (67 aa).

The protein belongs to the methylthiotransferase family. MiaB subfamily. As to quaternary structure, monomer. The cofactor is [4Fe-4S] cluster.

Its subcellular location is the cytoplasm. It carries out the reaction N(6)-dimethylallyladenosine(37) in tRNA + (sulfur carrier)-SH + AH2 + 2 S-adenosyl-L-methionine = 2-methylsulfanyl-N(6)-dimethylallyladenosine(37) in tRNA + (sulfur carrier)-H + 5'-deoxyadenosine + L-methionine + A + S-adenosyl-L-homocysteine + 2 H(+). Catalyzes the methylthiolation of N6-(dimethylallyl)adenosine (i(6)A), leading to the formation of 2-methylthio-N6-(dimethylallyl)adenosine (ms(2)i(6)A) at position 37 in tRNAs that read codons beginning with uridine. This Helicobacter pylori (strain G27) protein is tRNA-2-methylthio-N(6)-dimethylallyladenosine synthase.